A 159-amino-acid polypeptide reads, in one-letter code: MEKACKEPEEQPQSPPKADEERPSVEPSPEKSSPEEQSSEEVSSEEEFFPDELLPELLPEMLESEERPPQERLSRKDLFEARPPMEQPPCGVGKHKLEEGSFKERLARSRPQFRGDIHGRNLSNEEMIKVAEEMEEMKRVRNKLMVMHWKARRNRPYPI.

The tract at residues 1–120 (MEKACKEPEE…PQFRGDIHGR (120 aa)) is disordered. The segment covering 17–34 (KADEERPSVEPSPEKSSP) has biased composition (basic and acidic residues). The segment covering 37-54 (QSSEEVSSEEEFFPDELL) has biased composition (acidic residues). Composition is skewed to basic and acidic residues over residues 64 to 80 (SEERPPQERLSRKDLFE) and 95 to 119 (HKLEEGSFKERLARSRPQFRGDIHG).

Belongs to the TFS-II family. TFA subfamily.

It is found in the nucleus. Functionally, may be involved in transcriptional regulation. Modulates various viral and cellular promoters in a promoter context-dependent manner. Does not bind DNA directly. The chain is Transcription elongation factor A protein-like 1 from Bos taurus (Bovine).